The following is a 127-amino-acid chain: Protein HI_1253 (127 aa).

Transmembrane regions (helical) follow at residues 13–33 (VIML…LLVI), 61–81 (LIVS…WWLV), 82–102 (AKFA…SKKV), and 107–127 (SIFF…AYLK).

Belongs to the SirB2 family.

The protein localises to the cell inner membrane. This chain is Protein HI_1253, found in Haemophilus influenzae (strain ATCC 51907 / DSM 11121 / KW20 / Rd).